A 215-amino-acid polypeptide reads, in one-letter code: Phosphatidylserine decarboxylase proenzyme (215 aa).

Serine 184 (schiff-base intermediate with substrate; via pyruvic acid) is an active-site residue. Serine 184 bears the Pyruvic acid (Ser); by autocatalysis mark.

This sequence belongs to the phosphatidylserine decarboxylase family. PSD-A subfamily. As to quaternary structure, heterodimer of a large membrane-associated beta subunit and a small pyruvoyl-containing alpha subunit. The cofactor is pyruvate. Is synthesized initially as an inactive proenzyme. Formation of the active enzyme involves a self-maturation process in which the active site pyruvoyl group is generated from an internal serine residue via an autocatalytic post-translational modification. Two non-identical subunits are generated from the proenzyme in this reaction, and the pyruvate is formed at the N-terminus of the alpha chain, which is derived from the carboxyl end of the proenzyme. The post-translation cleavage follows an unusual pathway, termed non-hydrolytic serinolysis, in which the side chain hydroxyl group of the serine supplies its oxygen atom to form the C-terminus of the beta chain, while the remainder of the serine residue undergoes an oxidative deamination to produce ammonia and the pyruvoyl prosthetic group on the alpha chain.

The protein resides in the cell membrane. The catalysed reaction is a 1,2-diacyl-sn-glycero-3-phospho-L-serine + H(+) = a 1,2-diacyl-sn-glycero-3-phosphoethanolamine + CO2. The protein operates within phospholipid metabolism; phosphatidylethanolamine biosynthesis; phosphatidylethanolamine from CDP-diacylglycerol: step 2/2. Its function is as follows. Catalyzes the formation of phosphatidylethanolamine (PtdEtn) from phosphatidylserine (PtdSer). This chain is Phosphatidylserine decarboxylase proenzyme, found in Aromatoleum aromaticum (strain DSM 19018 / LMG 30748 / EbN1) (Azoarcus sp. (strain EbN1)).